The primary structure comprises 118 residues: Small ribosomal subunit protein uS13 (118 aa).

Positions 94–118 (SLPLRGQRTKTNARTRKGPRKPIRK) are disordered.

This sequence belongs to the universal ribosomal protein uS13 family. Part of the 30S ribosomal subunit. Forms a loose heterodimer with protein S19. Forms two bridges to the 50S subunit in the 70S ribosome.

Its function is as follows. Located at the top of the head of the 30S subunit, it contacts several helices of the 16S rRNA. In the 70S ribosome it contacts the 23S rRNA (bridge B1a) and protein L5 of the 50S subunit (bridge B1b), connecting the 2 subunits; these bridges are implicated in subunit movement. Contacts the tRNAs in the A and P-sites. In Shewanella denitrificans (strain OS217 / ATCC BAA-1090 / DSM 15013), this protein is Small ribosomal subunit protein uS13.